A 121-amino-acid polypeptide reads, in one-letter code: Large-conductance mechanosensitive channel (121 aa).

Transmembrane regions (helical) follow at residues 14–34 (VLDL…VKSL) and 67–87 (GAFL…FVLI).

Belongs to the MscL family. As to quaternary structure, homopentamer.

Its subcellular location is the cell membrane. Channel that opens in response to stretch forces in the membrane lipid bilayer. May participate in the regulation of osmotic pressure changes within the cell. In Lactococcus lactis subsp. cremoris (strain SK11), this protein is Large-conductance mechanosensitive channel.